The chain runs to 106 residues: Large ribosomal subunit protein eL42 (106 aa).

Over residues 1–29 (MVNIPKTRRTYCKGKACRKHTPHKVTQYK) the composition is skewed to basic residues. The disordered stretch occupies residues 1–56 (MVNIPKTRRTYCKGKACRKHTPHKVTQYKKGKDSLSAQGKRRYDRKQSGYGGQTKP).

The protein belongs to the eukaryotic ribosomal protein eL42 family.

The sequence is that of Large ribosomal subunit protein eL42 (RPL44) from Cryptococcus neoformans var. neoformans serotype D (strain B-3501A) (Filobasidiella neoformans).